We begin with the raw amino-acid sequence, 391 residues long: Processive diacylglycerol beta-glucosyltransferase (391 aa).

This sequence belongs to the glycosyltransferase 28 family. UgtP subfamily.

It localises to the cell membrane. It carries out the reaction a 1,2-diacyl-3-O-(beta-D-glucopyranosyl)-sn-glycerol + UDP-alpha-D-glucose = a 1,2-diacyl-3-O-(beta-D-Glc-(1-&gt;6)-beta-D-Glc)-sn-glycerol + UDP + H(+). It catalyses the reaction a 1,2-diacyl-sn-glycerol + UDP-alpha-D-glucose = a 1,2-diacyl-3-O-(beta-D-glucopyranosyl)-sn-glycerol + UDP + H(+). It participates in glycolipid metabolism; diglucosyl-diacylglycerol biosynthesis. In terms of biological role, processive glucosyltransferase involved in the biosynthesis of both the bilayer- and non-bilayer-forming membrane glucolipids. Is able to successively transfer two glucosyl residues to diacylglycerol (DAG), thereby catalyzing the formation of beta-monoglucosyl-DAG (3-O-(beta-D-glucopyranosyl)-1,2-diacyl-sn-glycerol) and beta-diglucosyl-DAG (3-O-(beta-D-glucopyranosyl-beta-(1-&gt;6)-D-glucopyranosyl)-1,2-diacyl-sn-glycerol). Beta-diglucosyl-DAG is the predominant glycolipid found in Bacillales and is also used as a membrane anchor for lipoteichoic acid (LTA). The polypeptide is Processive diacylglycerol beta-glucosyltransferase (Staphylococcus saprophyticus subsp. saprophyticus (strain ATCC 15305 / DSM 20229 / NCIMB 8711 / NCTC 7292 / S-41)).